A 102-amino-acid chain; its full sequence is NADH-quinone oxidoreductase subunit K 2 (102 aa).

3 helical membrane passes run 6–26 (LEAF…GIIA), 30–50 (LVTV…ALVG), and 66–86 (FIIA…IAIF).

Belongs to the complex I subunit 4L family. NDH-1 is composed of 14 different subunits. Subunits NuoA, H, J, K, L, M, N constitute the membrane sector of the complex.

The protein localises to the cell inner membrane. The catalysed reaction is a quinone + NADH + 5 H(+)(in) = a quinol + NAD(+) + 4 H(+)(out). In terms of biological role, NDH-1 shuttles electrons from NADH, via FMN and iron-sulfur (Fe-S) centers, to quinones in the respiratory chain. The immediate electron acceptor for the enzyme in this species is believed to be ubiquinone. Couples the redox reaction to proton translocation (for every two electrons transferred, four hydrogen ions are translocated across the cytoplasmic membrane), and thus conserves the redox energy in a proton gradient. This chain is NADH-quinone oxidoreductase subunit K 2, found in Aquifex aeolicus (strain VF5).